Consider the following 344-residue polypeptide: HTH-type transcriptional repressor MelR (344 aa).

Residues 2 to 58 form the HTH lacI-type domain; sequence VRIKDIALKAKVSSATVSRILNEDESLSVAGETRQRVINIAEELGYQTVAKRRKSRG. A DNA-binding region (H-T-H motif) is located at residues 4–23; that stretch reads IKDIALKAKVSSATVSRILN.

Its subcellular location is the cytoplasm. Its function is as follows. Represses the melibiose operon melREDCA in the absence of melibiose or raffinose. Binds to two binding sites at the promoter region of the operon. The sequence is that of HTH-type transcriptional repressor MelR from Bacillus subtilis (strain 168).